The primary structure comprises 100 residues: NADH-quinone oxidoreductase subunit K (100 aa).

3 helical membrane passes run 4 to 24 (LSHG…GMII), 28 to 48 (LLFM…AFVV), and 60 to 80 (VMYI…LALL).

Belongs to the complex I subunit 4L family. NDH-1 is composed of 13 different subunits. Subunits NuoA, H, J, K, L, M, N constitute the membrane sector of the complex.

It is found in the cell inner membrane. The enzyme catalyses a quinone + NADH + 5 H(+)(in) = a quinol + NAD(+) + 4 H(+)(out). NDH-1 shuttles electrons from NADH, via FMN and iron-sulfur (Fe-S) centers, to quinones in the respiratory chain. The immediate electron acceptor for the enzyme in this species is believed to be ubiquinone. Couples the redox reaction to proton translocation (for every two electrons transferred, four hydrogen ions are translocated across the cytoplasmic membrane), and thus conserves the redox energy in a proton gradient. In Sodalis glossinidius (strain morsitans), this protein is NADH-quinone oxidoreductase subunit K.